A 271-amino-acid chain; its full sequence is Cobalt import ATP-binding protein CbiO (271 aa).

Residues 2 to 236 (LATSDLWFRY…TEAMEHAGLT (235 aa)) enclose the ABC transporter domain. 34–41 (GANGCGKS) is a binding site for ATP.

The protein belongs to the ABC transporter superfamily. Cobalt importer (TC 3.A.1.18.1) family. Forms an energy-coupling factor (ECF) transporter complex composed of an ATP-binding protein (A component, CbiO), a transmembrane protein (T component, CbiQ) and 2 possible substrate-capture proteins (S components, CbiM and CbiN) of unknown stoichimetry. Expression of just CbiMN in E.coli confers some cobalt uptake.

It is found in the cell inner membrane. The protein operates within cofactor biosynthesis; adenosylcobalamin biosynthesis. In terms of biological role, part of the energy-coupling factor (ECF) transporter complex CbiMNOQ involved in cobalt import. The complex confers cobalt uptake upon expression in E.coli; can also transport nickel with a very low affinity. Presumably responsible for energy coupling to the transport system. This Salmonella typhimurium (strain LT2 / SGSC1412 / ATCC 700720) protein is Cobalt import ATP-binding protein CbiO.